The following is a 478-amino-acid chain: Pentraxin-4 (478 aa).

The signal sequence occupies residues 1–25 (MGCSWRKTLSFFLVFVPIYLHGASS). N-linked (GlcNAc...) asparagine glycans are attached at residues N67 and N91. Over residues 208–222 (RDRQELRAASEHRGP) the composition is skewed to basic and acidic residues. The tract at residues 208 to 262 (RDRQELRAASEHRGPPQDSSAPLQGRREPPASGSHRVLSGTAPKDPRQQAWSPQV) is disordered. One can recognise a Pentraxin (PTX) domain in the interval 269–473 (VGPTLVFPNA…GFVQGANCTC (205 aa)). The cysteines at positions 300 and 364 are disulfide-linked. D322, N323, E406, Q407, and D408 together coordinate Ca(2+).

The cofactor is Ca(2+). Widely expressed at low levels with highest levels in small intestine, testis and brain. Very low expression in endothelial cells, monocytes, neutrophils and lymphocytes. Isoform 1 is not expressed in small intestine.

It is found in the secreted. This chain is Pentraxin-4 (PTX4), found in Homo sapiens (Human).